The following is a 323-amino-acid chain: o-succinylbenzoate synthase (323 aa).

Residue lysine 134 is the Proton donor of the active site. Residues aspartate 162, glutamate 191, and aspartate 214 each coordinate Mg(2+). The active-site Proton acceptor is the lysine 236.

Belongs to the mandelate racemase/muconate lactonizing enzyme family. MenC type 1 subfamily. It depends on a divalent metal cation as a cofactor.

It catalyses the reaction (1R,6R)-6-hydroxy-2-succinyl-cyclohexa-2,4-diene-1-carboxylate = 2-succinylbenzoate + H2O. The protein operates within quinol/quinone metabolism; 1,4-dihydroxy-2-naphthoate biosynthesis; 1,4-dihydroxy-2-naphthoate from chorismate: step 4/7. Its pathway is quinol/quinone metabolism; menaquinone biosynthesis. Converts 2-succinyl-6-hydroxy-2,4-cyclohexadiene-1-carboxylate (SHCHC) to 2-succinylbenzoate (OSB). The sequence is that of o-succinylbenzoate synthase from Yersinia pseudotuberculosis serotype IB (strain PB1/+).